The chain runs to 141 residues: Glutamyl-tRNA(Gln) amidotransferase subunit C, chloroplastic/mitochondrial (141 aa).

Belongs to the GatC family. Subunit of the heterotrimeric GatCAB amidotransferase (AdT) complex, composed of A, B and C subunits.

It is found in the mitochondrion. It localises to the plastid. Its subcellular location is the chloroplast. It carries out the reaction L-glutamyl-tRNA(Gln) + L-glutamine + ATP + H2O = L-glutaminyl-tRNA(Gln) + L-glutamate + ADP + phosphate + H(+). Its function is as follows. Allows the formation of correctly charged Gln-tRNA(Gln) through the transamidation of misacylated Glu-tRNA(Gln) in chloroplasts and mitochondria. The reaction takes place in the presence of glutamine and ATP through an activated gamma-phospho-Glu-tRNA(Gln). The protein is Glutamyl-tRNA(Gln) amidotransferase subunit C, chloroplastic/mitochondrial of Populus trichocarpa (Western balsam poplar).